The chain runs to 573 residues: MSVETSSETGNKPDIKPRSRIVTDGIAAAPARGMLRAVGFGDEDFAKPQIGVASSWNEITPCNLSLDRLAKAVKEGVHAGGGFPMIFGTISVSDGISMGHEGMHFSLVSREVIADSVETVMQAERIDGSVLLAGCDKSLPGMLMAAARLNVSSVFLYAGSIMPGWVKLEDGTEKDVTLIDAFEAVGACAAGKMSVGDLDRIERAICPGEGACGGMYTANTMACIGEALGMSLPGSAAPPSADRRRDMFAHRSGEAVVELLRRGIRSRDIMTKEAFENAIAVTMAFGGSTNAVLHLLAIAREAEVDLQLEDFNRIGDKIPHLGDLKPFGRYVMNDVDRVGGVPVIMRALLDAGLLHGDALTVTGKTLAENLEAINPPDLDGKILRALDNPIHKTGGLSVLKGSLAPGGAVVKTAGFDAEVFEGPARVFEREQGALEALKAGEIKAGDVVVIRYEGPKGGPGMREMLAITGAIKGAGLGKDVLLLTDGRFSGGTTGLCIGHVAPEAVDAGPIAFVQDGDLIRVDIPNKSFDLLVDEAELEARKIGWEPLPARFTKGVLAKYAKLVHSASEGAYCG.

Residue cysteine 62 participates in [2Fe-2S] cluster binding. Mg(2+) is bound at residue aspartate 94. Cysteine 135 contacts [2Fe-2S] cluster. Aspartate 136 and lysine 137 together coordinate Mg(2+). Lysine 137 is subject to N6-carboxylysine. Residue cysteine 212 coordinates [2Fe-2S] cluster. Mg(2+) is bound at residue glutamate 463. The active-site Proton acceptor is serine 489.

The protein belongs to the IlvD/Edd family. Homodimer. The cofactor is [2Fe-2S] cluster. Mg(2+) serves as cofactor.

The enzyme catalyses (2R)-2,3-dihydroxy-3-methylbutanoate = 3-methyl-2-oxobutanoate + H2O. It carries out the reaction (2R,3R)-2,3-dihydroxy-3-methylpentanoate = (S)-3-methyl-2-oxopentanoate + H2O. It functions in the pathway amino-acid biosynthesis; L-isoleucine biosynthesis; L-isoleucine from 2-oxobutanoate: step 3/4. It participates in amino-acid biosynthesis; L-valine biosynthesis; L-valine from pyruvate: step 3/4. Functionally, functions in the biosynthesis of branched-chain amino acids. Catalyzes the dehydration of (2R,3R)-2,3-dihydroxy-3-methylpentanoate (2,3-dihydroxy-3-methylvalerate) into 2-oxo-3-methylpentanoate (2-oxo-3-methylvalerate) and of (2R)-2,3-dihydroxy-3-methylbutanoate (2,3-dihydroxyisovalerate) into 2-oxo-3-methylbutanoate (2-oxoisovalerate), the penultimate precursor to L-isoleucine and L-valine, respectively. The chain is Dihydroxy-acid dehydratase from Renibacterium salmoninarum (strain ATCC 33209 / DSM 20767 / JCM 11484 / NBRC 15589 / NCIMB 2235).